Reading from the N-terminus, the 260-residue chain is Glutathione S-transferase domain-containing protein DDB_G0274223 (260 aa).

One can recognise a GST N-terminal domain in the interval 7-96; sequence KVDYIFYTNN…YLAQKYNTFL (90 aa). One can recognise a GST C-terminal domain in the interval 102–233; it reads NPHENSDVIT…GFKTFNPSAL (132 aa).

Belongs to the GST superfamily.

This Dictyostelium discoideum (Social amoeba) protein is Glutathione S-transferase domain-containing protein DDB_G0274223.